The chain runs to 768 residues: Polyadenylate-binding protein, cytoplasmic and nuclear (768 aa).

Residues 1-11 show a composition bias toward polar residues; sequence MSAETATNPPV. A disordered region spans residues 1 to 52; sequence MSAETATNPPVDTTPGAAPESATNGSNANVAADTTAGEASQTTSSTTPTAQP. Over residues 39–52 the composition is skewed to low complexity; it reads ASQTTSSTTPTAQP. RRM domains follow at residues 55 to 133, 143 to 220, 236 to 314, and 340 to 470; these read ASLY…WSQR, GNVF…HHIA, TNVY…RAQK, and VNLY…LAQR. Disordered regions lie at residues 374-428, 633-662, and 739-768; these read DFAP…EKKP, QQGMGRPGQAGRGQGAPAQAVGQRDENASP, and KNKGGDSGEPAADANKSKDASQETAEETKS. The segment covering 637-646 has biased composition (gly residues); it reads GRPGQAGRGQ. The region spanning 662 to 739 is the PABC domain; the sequence is PNGLTLQVLN…ALTVYDEYVK (78 aa). Basic and acidic residues predominate over residues 753 to 768; that stretch reads NKSKDASQETAEETKS.

Belongs to the polyadenylate-binding protein type-1 family.

The protein localises to the cytoplasm. Its subcellular location is the nucleus. In terms of biological role, binds the poly(A) tail of mRNA. Appears to be an important mediator of the multiple roles of the poly(A) tail in mRNA biogenesis, stability and translation. In the nucleus, involved in both mRNA cleavage and polyadenylation. Is also required for efficient mRNA export to the cytoplasm. Acts in concert with a poly(A)-specific nuclease (PAN) to affect poly(A) tail shortening, which may occur concomitantly with either nucleocytoplasmic mRNA transport or translational initiation. In the cytoplasm, stimulates translation initiation and regulates mRNA decay through translation termination-coupled poly(A) shortening, probably mediated by PAN. In Coccidioides immitis (strain RS) (Valley fever fungus), this protein is Polyadenylate-binding protein, cytoplasmic and nuclear (PAB1).